Consider the following 153-residue polypeptide: MSIIDNRKASHDYFIEDRYEAGLVLQGWEVKSIRAGRVQLKESYVIVRDGELFLLGMHVSPLPTASTHIHPDAMRTRKLLLKAEEIHKLIGKVEQRGFTLVPLNLHYKNGRVKLDFALGRGKKLYDKRDTSREKDWLRERERVMKHDTRRRSD.

Residues 132–153 (REKDWLRERERVMKHDTRRRSD) form a disordered region.

It belongs to the SmpB family.

The protein localises to the cytoplasm. Required for rescue of stalled ribosomes mediated by trans-translation. Binds to transfer-messenger RNA (tmRNA), required for stable association of tmRNA with ribosomes. tmRNA and SmpB together mimic tRNA shape, replacing the anticodon stem-loop with SmpB. tmRNA is encoded by the ssrA gene; the 2 termini fold to resemble tRNA(Ala) and it encodes a 'tag peptide', a short internal open reading frame. During trans-translation Ala-aminoacylated tmRNA acts like a tRNA, entering the A-site of stalled ribosomes, displacing the stalled mRNA. The ribosome then switches to translate the ORF on the tmRNA; the nascent peptide is terminated with the 'tag peptide' encoded by the tmRNA and targeted for degradation. The ribosome is freed to recommence translation, which seems to be the essential function of trans-translation. The sequence is that of SsrA-binding protein from Bordetella avium (strain 197N).